Here is a 335-residue protein sequence, read N- to C-terminus: MDAEGEQKSNGVKEPNTPLREALDEIFLNVGYLLRSLLANVPNALYHSQLQAACQKFQDYCDLEEIRIIEAKRVVERDLRSLEAKEVEEKSQFASFVSATPPGANSLQGNVSLPSGNNFFTSSFDSENISKPGEVSLSESQLLGNLNQQSSIQLPDRMPKTTNGTLADPNMPPKTTVNDQDVTKDASQQFGGSNFSNYLRDNDSFQFGMNTDASGDAHLQASEFLLPNLFGNSSTSPQDNFGTSNSALSRNLDLFGSPSSENKSTAGSASLFPNQQMGIDLQAQENYSAAFGNDGSFASHLTNTFDNALNLPTDIPTTESINDLFGENFDFTMTK.

Disordered stretches follow at residues 152–179 (IQLP…TVND) and 252–271 (LDLF…SASL). Residues serine 257 and serine 260 each carry the phosphoserine modification. Polar residues predominate over residues 257 to 271 (SPSSENKSTAGSASL).

This is an uncharacterized protein from Schizosaccharomyces pombe (strain 972 / ATCC 24843) (Fission yeast).